A 483-amino-acid chain; its full sequence is 5-hydroxytryptamine receptor 3A (483 aa).

An N-terminal signal peptide occupies residues 1–23 (MPLCIPQVLLALFLSVLIAQGEG). Topologically, residues 24 to 246 (SRRRATQAHS…MKFYVVIRRR (223 aa)) are extracellular. Asn-109, Asn-175, and Asn-191 each carry an N-linked (GlcNAc...) asparagine glycan. An intrachain disulfide couples Cys-162 to Cys-176. Residues 247–273 (PLFYAVSLLLPSIFLMVVDIVGFCLPP) form a helical membrane-spanning segment. The Cytoplasmic segment spans residues 274 to 278 (DSGER). Residues 279–297 (VSFKITLLLGYSVFLIIVS) form a helical membrane-spanning segment. Topologically, residues 298-307 (DTLPATAIGT) are extracellular. Residues 308-326 (PLIGVYFVVCMALLVISLA) traverse the membrane as a helical segment. Topologically, residues 327-460 (ETIFIVQLVH…GYVLDRLLFR (134 aa)) are cytoplasmic. The disordered stretch occupies residues 393–414 (VGSPQDLEKTSRSRDSPLPPPR). Residues 398–407 (DLEKTSRSRD) show a composition bias toward basic and acidic residues. The segment at 419-455 (AVRGLLQELSSIRHSLEKRDEMREVARDWLRVGYVLD) is HA-stretch; determines single-channel conductance in 5-HT3 receptors. The chain crosses the membrane as a helical span at residues 461 to 480 (IYLLAVLAYSITLVTLWSIW). Topologically, residues 481-483 (HYS) are extracellular.

The protein belongs to the ligand-gated ion channel (TC 1.A.9) family. 5-hydroxytryptamine receptor (TC 1.A.9.2) subfamily. HTR3A sub-subfamily. In terms of assembly, forms homopentameric as well as heteropentameric serotonin-activated cation-selective channel complexes with HTR3B or HTR3C or HTR3D or HTR3E. The homomeric complex is functional but exhibits low conductance with modified voltage dependence, and decreased agonist and antagonist affinity. Heteropentameric complexes display properties which resemble that of neuronal serotonin-activated channels in vivo. Interacts with RIC3. In terms of tissue distribution, expressed in central and peripheral neurons.

The protein localises to the postsynaptic cell membrane. Its subcellular location is the cell membrane. It catalyses the reaction Na(+)(in) = Na(+)(out). It carries out the reaction K(+)(in) = K(+)(out). The enzyme catalyses Ca(2+)(in) = Ca(2+)(out). The catalysed reaction is Mg(2+)(in) = Mg(2+)(out). Functionally, forms serotonin (5-hydroxytryptamine/5-HT3)-activated cation-selective channel complexes, which when activated cause fast, depolarizing responses in neurons. This is 5-hydroxytryptamine receptor 3A from Rattus norvegicus (Rat).